The following is a 101-amino-acid chain: Large ribosomal subunit protein bL28 (101 aa).

Belongs to the bacterial ribosomal protein bL28 family.

This chain is Large ribosomal subunit protein bL28, found in Methylorubrum extorquens (strain CM4 / NCIMB 13688) (Methylobacterium extorquens).